The chain runs to 251 residues: Flap endonuclease Xni (251 aa).

A Mg(2+)-binding site is contributed by D104. Residues 160-249 (VLPQQLPDYW…IDGNLQQLRL (90 aa)) enclose the 5'-3' exonuclease domain. The K(+) site is built by L171, A172, P180, V182, and I185. The interaction with DNA stretch occupies residues 184–189 (GIGPKS).

This sequence belongs to the Xni family. Mg(2+) is required as a cofactor. It depends on K(+) as a cofactor.

Functionally, has flap endonuclease activity. During DNA replication, flap endonucleases cleave the 5'-overhanging flap structure that is generated by displacement synthesis when DNA polymerase encounters the 5'-end of a downstream Okazaki fragment. The protein is Flap endonuclease Xni of Citrobacter koseri (strain ATCC BAA-895 / CDC 4225-83 / SGSC4696).